Reading from the N-terminus, the 357-residue chain is Alanine racemase, catabolic (357 aa).

The active-site Proton acceptor; specific for D-alanine is the Lys33. Lys33 carries the N6-(pyridoxal phosphate)lysine modification. The residue at position 122 (Lys122) is an N6-carboxylysine. Residue Arg129 coordinates substrate. Catalysis depends on Tyr253, which acts as the Proton acceptor; specific for L-alanine. Met301 contacts substrate.

This sequence belongs to the alanine racemase family. Homodimer. Pyridoxal 5'-phosphate serves as cofactor.

It carries out the reaction L-alanine = D-alanine. Its function is as follows. Isomerizes L-alanine to D-alanine which is then oxidized to pyruvate by DadA. In Pseudomonas aeruginosa (strain ATCC 15692 / DSM 22644 / CIP 104116 / JCM 14847 / LMG 12228 / 1C / PRS 101 / PAO1), this protein is Alanine racemase, catabolic.